The sequence spans 203 residues: Orotate phosphoribosyltransferase (203 aa).

Residues Arg-94, Lys-98, His-100, and 120 to 128 (EDLISTGGS) contribute to the 5-phospho-alpha-D-ribose 1-diphosphate site. Ser-124 provides a ligand contact to orotate.

It belongs to the purine/pyrimidine phosphoribosyltransferase family. PyrE subfamily. Homodimer. It depends on Mg(2+) as a cofactor.

The enzyme catalyses orotidine 5'-phosphate + diphosphate = orotate + 5-phospho-alpha-D-ribose 1-diphosphate. Its pathway is pyrimidine metabolism; UMP biosynthesis via de novo pathway; UMP from orotate: step 1/2. Catalyzes the transfer of a ribosyl phosphate group from 5-phosphoribose 1-diphosphate to orotate, leading to the formation of orotidine monophosphate (OMP). The protein is Orotate phosphoribosyltransferase of Staphylococcus epidermidis (strain ATCC 35984 / DSM 28319 / BCRC 17069 / CCUG 31568 / BM 3577 / RP62A).